Here is a 66-residue protein sequence, read N- to C-terminus: Large ribosomal subunit protein uL29 (66 aa).

Belongs to the universal ribosomal protein uL29 family.

The protein is Large ribosomal subunit protein uL29 of Roseiflexus castenholzii (strain DSM 13941 / HLO8).